The sequence spans 35 residues: Photosystem II reaction center protein T (35 aa).

The chain crosses the membrane as a helical span at residues 3–23; the sequence is ALVYTFLLXSTLGIIFFAIFF.

It belongs to the PsbT family. In terms of assembly, PSII is composed of 1 copy each of membrane proteins PsbA, PsbB, PsbC, PsbD, PsbE, PsbF, PsbH, PsbI, PsbJ, PsbK, PsbL, PsbM, PsbT, PsbY, PsbZ, Psb30/Ycf12, at least 3 peripheral proteins of the oxygen-evolving complex and a large number of cofactors. It forms dimeric complexes.

The protein localises to the plastid. Its subcellular location is the chloroplast thylakoid membrane. Its function is as follows. Found at the monomer-monomer interface of the photosystem II (PS II) dimer, plays a role in assembly and dimerization of PSII. PSII is a light-driven water plastoquinone oxidoreductase, using light energy to abstract electrons from H(2)O, generating a proton gradient subsequently used for ATP formation. This chain is Photosystem II reaction center protein T, found in Cunninghamia lanceolata (China fir).